We begin with the raw amino-acid sequence, 123 residues long: Small ribosomal subunit protein uS8 (123 aa).

This sequence belongs to the universal ribosomal protein uS8 family. Part of the 30S ribosomal subunit. Contacts proteins S5 and S12.

Its function is as follows. One of the primary rRNA binding proteins, it binds directly to 16S rRNA central domain where it helps coordinate assembly of the platform of the 30S subunit. The sequence is that of Small ribosomal subunit protein uS8 (rpsH) from Carsonella ruddii (strain PV).